The chain runs to 106 residues: UPF0122 protein Exig_1902 (106 aa).

This sequence belongs to the UPF0122 family.

In terms of biological role, might take part in the signal recognition particle (SRP) pathway. This is inferred from the conservation of its genetic proximity to ftsY/ffh. May be a regulatory protein. The polypeptide is UPF0122 protein Exig_1902 (Exiguobacterium sibiricum (strain DSM 17290 / CCUG 55495 / CIP 109462 / JCM 13490 / 255-15)).